Here is a 1275-residue protein sequence, read N- to C-terminus: Mediator of RNA polymerase II transcription subunit 33B (1275 aa).

Positions 772–791 (GSQSLTPSSGSSSLSTSGGD) are enriched in low complexity. Residues 772-792 (GSQSLTPSSGSSSLSTSGGDD) are disordered.

The protein belongs to the Mediator complex subunit 33 family. Component of the Mediator complex. In terms of tissue distribution, ubiquitous.

It localises to the nucleus. In terms of biological role, component of the Mediator complex, a coactivator involved in the regulated transcription of nearly all RNA polymerase II-dependent genes. Mediator functions as a bridge to convey information from gene-specific regulatory proteins to the basal RNA polymerase II transcription machinery. The Mediator complex, having a compact conformation in its free form, is recruited to promoters by direct interactions with regulatory proteins and serves for the assembly of a functional preinitiation complex with RNA polymerase II and the general transcription factors. Involved in the repression of phenylpropanoid biosynthesis. May compete with MED33B for common binding partners or for occupancy in Mediator. The polypeptide is Mediator of RNA polymerase II transcription subunit 33B (MED33B) (Arabidopsis thaliana (Mouse-ear cress)).